We begin with the raw amino-acid sequence, 1068 residues long: Focal adhesion kinase 1 (1068 aa).

Positions 1–26 (MAAAYLDPNLNHNPSTNAKSRLSTGM) are disordered. Over residues 10–23 (LNHNPSTNAKSRLS) the composition is skewed to polar residues. Residues 35-355 (RVLRVFHYFE…GYCRLVSGAS (321 aa)) enclose the FERM domain. A phosphotyrosine mark is found at tyrosine 403 and tyrosine 413. One can recognise a Protein kinase domain in the interval 435–693 (IELGRCIGEG…ELKAQLSTIL (259 aa)). Residues 441 to 447 (IGEGQFG), lysine 467, and 513 to 515 (ELC) each bind ATP. Aspartate 559 functions as the Proton acceptor in the catalytic mechanism. Phosphotyrosine; by autocatalysis occurs at positions 589 and 590. Over residues 699–710 (QQEERMRMESRR) the composition is skewed to basic and acidic residues. Disordered stretches follow at residues 699-750 (QQEE…QHMM) and 869-912 (GNQH…DGYN). 2 positions are modified to phosphotyrosine: tyrosine 874 and tyrosine 941.

The protein belongs to the protein kinase superfamily. Tyr protein kinase family. FAK subfamily. In terms of processing, phosphorylated on tyrosine residues; phosphorylated kinase is first detected during gastrulation, suggesting that tyrosine phosphorylation is developmentally regulated.

It is found in the cell junction. The protein localises to the focal adhesion. Its subcellular location is the cell membrane. The protein resides in the cytoplasm. It localises to the cytoskeleton. It is found in the cilium basal body. It catalyses the reaction L-tyrosyl-[protein] + ATP = O-phospho-L-tyrosyl-[protein] + ADP + H(+). Functionally, non-receptor protein-tyrosine kinase implicated in signaling pathways involved in cell motility, proliferation and apoptosis. Activated by tyrosine-phosphorylation in response to either integrin clustering induced by cell adhesion or antibody cross-linking, or via G-protein coupled receptor (GPCR) occupancy by ligands such as bombesin or lysophosphatidic acid, or via LDL receptor occupancy. Microtubule-induced dephosphorylation at Tyr-397 is crucial for the induction of focal adhesion disassembly. This chain is Focal adhesion kinase 1 (ptk2), found in Xenopus laevis (African clawed frog).